A 688-amino-acid chain; its full sequence is DNA-directed RNA polymerase subunit beta' (688 aa).

Positions 69, 71, 87, and 90 each coordinate Zn(2+). Mg(2+) is bound by residues Asp497, Asp499, and Asp501.

This sequence belongs to the RNA polymerase beta' chain family. RpoC1 subfamily. In terms of assembly, in plastids the minimal PEP RNA polymerase catalytic core is composed of four subunits: alpha, beta, beta', and beta''. When a (nuclear-encoded) sigma factor is associated with the core the holoenzyme is formed, which can initiate transcription. It depends on Mg(2+) as a cofactor. Zn(2+) serves as cofactor.

It is found in the plastid. The protein localises to the chloroplast. It carries out the reaction RNA(n) + a ribonucleoside 5'-triphosphate = RNA(n+1) + diphosphate. In terms of biological role, DNA-dependent RNA polymerase catalyzes the transcription of DNA into RNA using the four ribonucleoside triphosphates as substrates. This Sinapis alba (White mustard) protein is DNA-directed RNA polymerase subunit beta'.